A 328-amino-acid chain; its full sequence is NADH-quinone oxidoreductase subunit H (328 aa).

Transmembrane regions (helical) follow at residues 8–28, 81–101, 114–134, 154–174, 186–206, 237–257, 265–285, and 304–324; these read VAAI…AVGA, GLFV…FMVI, IGLL…LFAG, LSYE…AGSF, LWFI…GIAV, FFVG…TLFL, LPPI…FILL, and VCLP…LIFS.

Belongs to the complex I subunit 1 family. NDH-1 is composed of 14 different subunits. Subunits NuoA, H, J, K, L, M, N constitute the membrane sector of the complex.

It localises to the cell inner membrane. The catalysed reaction is a quinone + NADH + 5 H(+)(in) = a quinol + NAD(+) + 4 H(+)(out). NDH-1 shuttles electrons from NADH, via FMN and iron-sulfur (Fe-S) centers, to quinones in the respiratory chain. The immediate electron acceptor for the enzyme in this species is believed to be ubiquinone. Couples the redox reaction to proton translocation (for every two electrons transferred, four hydrogen ions are translocated across the cytoplasmic membrane), and thus conserves the redox energy in a proton gradient. This subunit may bind ubiquinone. This is NADH-quinone oxidoreductase subunit H from Chromohalobacter salexigens (strain ATCC BAA-138 / DSM 3043 / CIP 106854 / NCIMB 13768 / 1H11).